Consider the following 288-residue polypeptide: MELRDLQIFKCVAHHKSITGAAKELNYVQSNVTARIKQLENELKTPLFNRHKKGVSLSPEGRKMIEYVNKILKDVEELEQVFLDTEIPSGILKIGTVETVRILPTIIASYYKKYPNVDLSLQAGLTEELIKKVMNHELDGAFISGPLKHSILEQYDVYTEKLTLVTSNKTFNIEDFSTTPILVFNQGCGYRSRLEQWLKDEGVLPNRMMEFNILETILNSVALGLGITVVPESAVMHLAVQGKVYCHPLPEKDSCISTIFIRHKDAYLTNSMRSLLKTIVEHKNMSMA.

The HTH lysR-type domain occupies 1 to 58 (MELRDLQIFKCVAHHKSITGAAKELNYVQSNVTARIKQLENELKTPLFNRHKKGVSLS). The segment at residues 18 to 37 (ITGAAKELNYVQSNVTARIK) is a DNA-binding region (H-T-H motif).

The protein belongs to the LysR transcriptional regulatory family.

The sequence is that of HTH-type transcriptional regulator CzcR (czcR) from Bacillus subtilis (strain 168).